Reading from the N-terminus, the 616-residue chain is Dihydroxy-acid dehydratase (616 aa).

Position 81 (Asp-81) interacts with Mg(2+). [2Fe-2S] cluster is bound at residue Cys-122. Mg(2+) is bound by residues Asp-123 and Lys-124. The residue at position 124 (Lys-124) is an N6-carboxylysine. Cys-195 contacts [2Fe-2S] cluster. Residue Glu-491 coordinates Mg(2+). Ser-517 serves as the catalytic Proton acceptor.

Belongs to the IlvD/Edd family. Homodimer. Requires [2Fe-2S] cluster as cofactor. Mg(2+) is required as a cofactor.

The catalysed reaction is (2R)-2,3-dihydroxy-3-methylbutanoate = 3-methyl-2-oxobutanoate + H2O. It catalyses the reaction (2R,3R)-2,3-dihydroxy-3-methylpentanoate = (S)-3-methyl-2-oxopentanoate + H2O. The protein operates within amino-acid biosynthesis; L-isoleucine biosynthesis; L-isoleucine from 2-oxobutanoate: step 3/4. It participates in amino-acid biosynthesis; L-valine biosynthesis; L-valine from pyruvate: step 3/4. Its function is as follows. Functions in the biosynthesis of branched-chain amino acids. Catalyzes the dehydration of (2R,3R)-2,3-dihydroxy-3-methylpentanoate (2,3-dihydroxy-3-methylvalerate) into 2-oxo-3-methylpentanoate (2-oxo-3-methylvalerate) and of (2R)-2,3-dihydroxy-3-methylbutanoate (2,3-dihydroxyisovalerate) into 2-oxo-3-methylbutanoate (2-oxoisovalerate), the penultimate precursor to L-isoleucine and L-valine, respectively. In Salmonella schwarzengrund (strain CVM19633), this protein is Dihydroxy-acid dehydratase.